The primary structure comprises 226 residues: Octanoyltransferase (226 aa).

The BPL/LPL catalytic domain maps to 37–220 (GTAGELIWLL…SFSKVFGPVE (184 aa)). Substrate is bound by residues 76 to 83 (RGGQFTYH), 151 to 153 (AIG), and 164 to 166 (GIS). The Acyl-thioester intermediate role is filled by Cys-182.

This sequence belongs to the LipB family.

Its subcellular location is the cytoplasm. The catalysed reaction is octanoyl-[ACP] + L-lysyl-[protein] = N(6)-octanoyl-L-lysyl-[protein] + holo-[ACP] + H(+). Its pathway is protein modification; protein lipoylation via endogenous pathway; protein N(6)-(lipoyl)lysine from octanoyl-[acyl-carrier-protein]: step 1/2. Functionally, catalyzes the transfer of endogenously produced octanoic acid from octanoyl-acyl-carrier-protein onto the lipoyl domains of lipoate-dependent enzymes. Lipoyl-ACP can also act as a substrate although octanoyl-ACP is likely to be the physiological substrate. The polypeptide is Octanoyltransferase (Caulobacter vibrioides (strain ATCC 19089 / CIP 103742 / CB 15) (Caulobacter crescentus)).